Here is a 1435-residue protein sequence, read N- to C-terminus: Probable ATP-dependent DNA helicase HFM1 (1435 aa).

The Helicase ATP-binding domain occupies 290–478 (DDLLYTDRNF…WLSDGERPAV (189 aa)). 303–310 (APTGSGKT) is an ATP binding site. The DEAH box motif lies at 411 to 414 (DEVH). The Helicase C-terminal domain occupies 519–720 (SVIQMYSDQK…DVNIAVEWIR (202 aa)). Residues 777–1092 (PTEAGRLMAW…GLDIQQKLTV (316 aa)) form the SEC63 domain. Residues 1109–1139 (KSETQISHSKHSDISTIAGPNKGTTASKKPG) are disordered. The C4-type zinc finger occupies 1143-1158 (CNHLCKSKHTCGHDCC). A disordered region spans residues 1295–1315 (GFGNTLSSSTRGSKLPLQESK). Residues 1296–1306 (FGNTLSSSTRG) are compositionally biased toward polar residues.

Belongs to the helicase family. SKI2 subfamily. Zn(2+) serves as cofactor. In terms of tissue distribution, preferentially expressed in testis and ovary.

The enzyme catalyses Couples ATP hydrolysis with the unwinding of duplex DNA by translocating in the 3'-5' direction.. It catalyses the reaction ATP + H2O = ADP + phosphate + H(+). In terms of biological role, required for crossover formation and complete synapsis of homologous chromosomes during meiosis. In Homo sapiens (Human), this protein is Probable ATP-dependent DNA helicase HFM1 (HFM1).